Consider the following 996-residue polypeptide: Receptor-like protein kinase HSL1 (996 aa).

A signal peptide spans 1–15; sequence MYLLFLFLLFPTVFS. At 16-618 the chain is on the extracellular side; the sequence is LNQDGFILQQ…ENEAKKRGYV (603 aa). LRR repeat units follow at residues 59–83, 84–107, 109–131, 133–154, 155–178, 179–203, 205–228, 229–252, 253–276, 278–299, 300–323, 325–347, 348–371, 373–395, 396–419, 421–443, 444–467, 468–491, 493–515, 516–539, 541–562, and 563–586; these read FSSV…ICRL, SNLA…IAAC, SLQT…LADI, TLVH…SFGK, FENL…FLGN, ISTL…EFGN, TNLE…LGQL, SKLV…LGGL, TNVV…LGNL, SLRL…ELCR, VPLE…IALS, NLYE…LGLN, SPLR…LCAK, ELEE…LADC, RSLT…FWGL, HVNL…IGGA, SNLS…IGSL, DNLN…LMSL, ELGT…IKSW, KKLN…IGSL, VLNY…SLQS, and LKLN…LAKD. 2 N-linked (GlcNAc...) asparagine glycosylation sites follow: Asn93 and Asn97. 4 N-linked (GlcNAc...) asparagine glycosylation sites follow: Asn143, Asn178, Asn186, and Asn203. A glycan (N-linked (GlcNAc...) asparagine) is linked at Asn262. 2 N-linked (GlcNAc...) asparagine glycosylation sites follow: Asn429 and Asn445. N-linked (GlcNAc...) asparagine glycosylation is present at Asn569. Residues 619-639 traverse the membrane as a helical segment; it reads WLLRSIFVLAAMVLLAGVAWF. At 640–996 the chain is on the cytoplasmic side; the sequence is YFKYRTFKKA…EDTSDQGSIA (357 aa). In terms of domain architecture, Protein kinase spans 676–962; the sequence is LDEDNVIGAG…RRVVKMLQEI (287 aa). Residues 682–690 and Lys704 contribute to the ATP site; that span reads IGAGASGKV. Phosphotyrosine is present on residues Tyr764 and Tyr802. The active-site Proton acceptor is the Asp815. A Phosphoserine modification is found at Ser851. Tyr859 and Tyr866 each carry phosphotyrosine. Thr867 carries the post-translational modification Phosphothreonine. The disordered stretch occupies residues 967–996; the sequence is EDSLHKIRDDKDGKLTPYYNEDTSDQGSIA. Positions 968 to 980 are enriched in basic and acidic residues; the sequence is DSLHKIRDDKDGK.

It belongs to the protein kinase superfamily. Ser/Thr protein kinase family.

The protein resides in the cell membrane. The catalysed reaction is L-seryl-[protein] + ATP = O-phospho-L-seryl-[protein] + ADP + H(+). The enzyme catalyses L-threonyl-[protein] + ATP = O-phospho-L-threonyl-[protein] + ADP + H(+). This is Receptor-like protein kinase HSL1 (HSL1) from Arabidopsis thaliana (Mouse-ear cress).